A 307-amino-acid chain; its full sequence is High-affinity branched-chain amino acid transport system permease protein BraD (307 aa).

Transmembrane regions (helical) follow at residues 21–41 (YALI…INFA), 45–65 (VYMI…MMGL), 70–90 (LMML…GYSI), 104–124 (LIPL…VMLS), 132–152 (IPTL…GVVI), 154–174 (YMQI…TLFI), 203–223 (IIAL…VLLG), 224–244 (MQYG…AFTA), 245–265 (AVLG…LLGV), and 280–300 (DVVA…GILG).

The protein belongs to the binding-protein-dependent transport system permease family. LivHM subfamily.

Its subcellular location is the cell inner membrane. In terms of biological role, component of the high affinity leucine, isoleucine, valine, transport system (LIV-I), which is operative without Na(+) and is specific for alanine and threonine, in addition to branched-chain amino acids. The protein is High-affinity branched-chain amino acid transport system permease protein BraD (braD) of Pseudomonas aeruginosa (strain ATCC 15692 / DSM 22644 / CIP 104116 / JCM 14847 / LMG 12228 / 1C / PRS 101 / PAO1).